The sequence spans 263 residues: Interleukin-15 receptor subunit alpha (263 aa).

The signal sequence occupies residues 1 to 32 (MASPQLRGYGVQAIPVLLLLLLLLLLPLRVTP). At 33 to 205 (GTTCPPPVSI…ISPHSSKMTK (173 aa)) the chain is on the extracellular side. In terms of domain architecture, Sushi spans 34 to 98 (TTCPPPVSIE…WTTPSLKCIR (65 aa)). 2 disulfides stabilise this stretch: Cys-36–Cys-78 and Cys-62–Cys-96. A glycan (N-linked (GlcNAc...) asparagine) is linked at Asn-51. A compositionally biased stretch (low complexity) spans 113–135 (TPKVTSQPESPSPSAKEPEAFSP). A disordered region spans residues 113-178 (TPKVTSQPES…HKSSRAPSLA (66 aa)). Over residues 136–145 (KSDTAMTTET) the composition is skewed to polar residues. Positions 154 to 169 (TPSQTTSAGTTGTGSH) are enriched in low complexity. A helical membrane pass occupies residues 206–226 (VAISTSVLLVGAGVVMAFLAW). The Cytoplasmic segment spans residues 227–263 (YIKSRQPSQPCRVEVETMETVPMTVRASSKEDEDTGA).

The interleukin-15 receptor IL15R is a heterotrimer of IL15RA, IL2RB and IL2RG. IL15RA also self-associates. Interacts with SYK. N-glycosylated and O-glycosylated. Post-translationally, a soluble form (sIL-15RA) arises from proteolytic shedding of the membrane-anchored receptor. It also binds IL15 and thus interferes with IL15 binding to the membrane receptor. In terms of tissue distribution, widely expressed.

The protein resides in the membrane. It localises to the nucleus membrane. It is found in the cell surface. Its subcellular location is the secreted. The protein localises to the extracellular space. Functionally, high-affinity receptor for interleukin-15. Can signal both in cis and trans where IL15R from one subset of cells presents IL15 to neighboring IL2RG-expressing cells. In neutrophils, binds and activates kinase SYK in response to IL15 stimulation. In neutrophils, required for IL15-induced phagocytosis in a SYK-dependent manner. The polypeptide is Interleukin-15 receptor subunit alpha (Il15ra) (Mus musculus (Mouse)).